The following is a 93-amino-acid chain: Sec-independent protein translocase protein TatA (93 aa).

Residues 1 to 21 (MGNVFSGWHLLVILLVIVLLF) traverse the membrane as a helical segment. Residues 49-93 (DITRSQDGHPDSQGNFAESASSVPFVKSEKQSEKRASVTEAKKSK) are disordered. Residues 60 to 70 (SQGNFAESASS) are compositionally biased toward polar residues. Positions 75 to 93 (KSEKQSEKRASVTEAKKSK) are enriched in basic and acidic residues.

It belongs to the TatA/E family. In terms of assembly, the Tat system comprises two distinct complexes: a TatABC complex, containing multiple copies of TatA, TatB and TatC subunits, and a separate TatA complex, containing only TatA subunits. Substrates initially bind to the TatABC complex, which probably triggers association of the separate TatA complex to form the active translocon.

It is found in the cell membrane. Part of the twin-arginine translocation (Tat) system that transports large folded proteins containing a characteristic twin-arginine motif in their signal peptide across membranes. TatA could form the protein-conducting channel of the Tat system. The chain is Sec-independent protein translocase protein TatA from Tropheryma whipplei (strain TW08/27) (Whipple's bacillus).